Consider the following 99-residue polypeptide: Ferredoxin-2 (99 aa).

The 93-residue stretch at 4 to 96 (YQVRLINKKR…DCTIRTHQEA (93 aa)) folds into the 2Fe-2S ferredoxin-type domain. Positions 42, 47, 50, and 80 each coordinate [2Fe-2S] cluster.

Belongs to the 2Fe2S plant-type ferredoxin family. Requires [2Fe-2S] cluster as cofactor.

Ferredoxins are iron-sulfur proteins that transfer electrons in a wide variety of metabolic reactions. Donates electrons to the nitrogenase. The chain is Ferredoxin-2 (fdxH) from Leptolyngbya boryana (Plectonema boryanum).